Reading from the N-terminus, the 256-residue chain is Triosephosphate isomerase (256 aa).

12-14 (NWK) is a substrate binding site. Catalysis depends on His-99, which acts as the Electrophile. Glu-169 serves as the catalytic Proton acceptor. Substrate contacts are provided by residues Gly-175, Ser-214, and 235–236 (GG).

This sequence belongs to the triosephosphate isomerase family. Homodimer.

The protein resides in the cytoplasm. The catalysed reaction is D-glyceraldehyde 3-phosphate = dihydroxyacetone phosphate. It functions in the pathway carbohydrate biosynthesis; gluconeogenesis. It participates in carbohydrate degradation; glycolysis; D-glyceraldehyde 3-phosphate from glycerone phosphate: step 1/1. Functionally, involved in the gluconeogenesis. Catalyzes stereospecifically the conversion of dihydroxyacetone phosphate (DHAP) to D-glyceraldehyde-3-phosphate (G3P). In Rhizobium meliloti (strain 1021) (Ensifer meliloti), this protein is Triosephosphate isomerase.